An 80-amino-acid chain; its full sequence is UPF0248 protein MJ1316 (80 aa).

It belongs to the UPF0248 family.

This Methanocaldococcus jannaschii (strain ATCC 43067 / DSM 2661 / JAL-1 / JCM 10045 / NBRC 100440) (Methanococcus jannaschii) protein is UPF0248 protein MJ1316.